Consider the following 625-residue polypeptide: Ankyrin repeat domain-containing protein oryK (625 aa).

ANK repeat units follow at residues methionine 1 to glycine 27, aspartate 31 to proline 60, asparagine 62 to arginine 89, glutamate 90 to aspartate 119, phenylalanine 162 to cysteine 195, glutamine 202 to isoleucine 232, aspartate 500 to phenylalanine 530, serine 534 to leucine 562, and glutamate 568 to isoleucine 598.

Its pathway is secondary metabolite biosynthesis. Its function is as follows. Ankyrin repeat domain-containing protein; part of the gene cluster that mediates the biosynthesis of oryzines, natural products with an unusual maleidride backbone. The two subunits of the fungal fatty acid synthase oryfasA and oryfasB probably form octenoic acid. This fatty acid is most likely activated by the acyl-CoA ligase oryP to give octenyl-CoA before the citrate synthase-like protein oryE catalyzes condensation with oxaloacetate to form tricarboxylic acid. The next steps of the pathways are conjectural, but a favorite possible route has been proposed, beginning with decarboxylation and concomitant dehydration by the decarboxylase oryM, followed by tautomerization, which may lead to the production of a diene intermediate. Reduction of this diene intermediate could give the known metabolite piliformic acid. On the pathway to oryzine B and oryzine A, however, hydroxylation of the diene by the alpha-ketoglutarate-dependent dioxygenase oryG and lactonisation by the lactonohydrolases oryH or oryL could give oryzine B directly. Finally, enoyl reduction by the dehydrogenase oryD would then convert oryzine B into oryzine A. In Aspergillus oryzae (strain ATCC 42149 / RIB 40) (Yellow koji mold), this protein is Ankyrin repeat domain-containing protein oryK.